We begin with the raw amino-acid sequence, 581 residues long: Invertase (581 aa).

Positions methionine 1–alanine 22 are cleaved as a signal peptide. N-linked (GlcNAc...) asparagine glycans are attached at residues asparagine 37, asparagine 40, asparagine 46, asparagine 57, asparagine 62, and asparagine 79. Substrate contacts are provided by residues phenylalanine 94–aspartate 97, glutamine 113, and phenylalanine 158–serine 159. Aspartate 97 is an active-site residue. 2 N-linked (GlcNAc...) asparagine glycosylation sites follow: asparagine 168 and asparagine 175. Substrate is bound by residues arginine 227–aspartate 228 and glutamate 280. Residue asparagine 322 is glycosylated (N-linked (GlcNAc...) asparagine). Tryptophan 366 lines the substrate pocket. N-linked (GlcNAc...) asparagine glycans are attached at residues asparagine 399, asparagine 409, asparagine 425, asparagine 446, asparagine 452, asparagine 519, and asparagine 569.

It belongs to the glycosyl hydrolase 32 family. Post-translationally, glycosylated; contains 67% carbohydrates. This is composed of equimolar amounts of mannose and galactose. There is also a small amount of glucosamine present.

It catalyses the reaction Hydrolysis of terminal non-reducing beta-D-fructofuranoside residues in beta-D-fructofuranosides.. The polypeptide is Invertase (inv1) (Schizosaccharomyces pombe (strain 972 / ATCC 24843) (Fission yeast)).